A 215-amino-acid chain; its full sequence is Phosphatidylserine decarboxylase proenzyme (215 aa).

Ser185 acts as the Schiff-base intermediate with substrate; via pyruvic acid in catalysis. Ser185 is modified (pyruvic acid (Ser); by autocatalysis).

Belongs to the phosphatidylserine decarboxylase family. PSD-A subfamily. In terms of assembly, heterodimer of a large membrane-associated beta subunit and a small pyruvoyl-containing alpha subunit. Pyruvate is required as a cofactor. Post-translationally, is synthesized initially as an inactive proenzyme. Formation of the active enzyme involves a self-maturation process in which the active site pyruvoyl group is generated from an internal serine residue via an autocatalytic post-translational modification. Two non-identical subunits are generated from the proenzyme in this reaction, and the pyruvate is formed at the N-terminus of the alpha chain, which is derived from the carboxyl end of the proenzyme. The post-translation cleavage follows an unusual pathway, termed non-hydrolytic serinolysis, in which the side chain hydroxyl group of the serine supplies its oxygen atom to form the C-terminus of the beta chain, while the remainder of the serine residue undergoes an oxidative deamination to produce ammonia and the pyruvoyl prosthetic group on the alpha chain.

The protein localises to the cell membrane. It catalyses the reaction a 1,2-diacyl-sn-glycero-3-phospho-L-serine + H(+) = a 1,2-diacyl-sn-glycero-3-phosphoethanolamine + CO2. It participates in phospholipid metabolism; phosphatidylethanolamine biosynthesis; phosphatidylethanolamine from CDP-diacylglycerol: step 2/2. In terms of biological role, catalyzes the formation of phosphatidylethanolamine (PtdEtn) from phosphatidylserine (PtdSer). The sequence is that of Phosphatidylserine decarboxylase proenzyme from Streptomyces griseus subsp. griseus (strain JCM 4626 / CBS 651.72 / NBRC 13350 / KCC S-0626 / ISP 5235).